A 154-amino-acid chain; its full sequence is Transcriptional repressor NrdR (154 aa).

A zinc finger spans residues 3–34; that stretch reads CPFCGNVDTQVKDSRPAEDNVAIRRRRFCPAC. Residues 49-139 form the ATP-cone domain; the sequence is LVVVKSSGRR…VYKNFQAADD (91 aa).

Belongs to the NrdR family. The cofactor is Zn(2+).

Negatively regulates transcription of bacterial ribonucleotide reductase nrd genes and operons by binding to NrdR-boxes. The chain is Transcriptional repressor NrdR from Paracoccus denitrificans (strain Pd 1222).